Here is a 421-residue protein sequence, read N- to C-terminus: Gamma-glutamyl phosphate reductase (421 aa).

Belongs to the gamma-glutamyl phosphate reductase family.

The protein resides in the cytoplasm. The catalysed reaction is L-glutamate 5-semialdehyde + phosphate + NADP(+) = L-glutamyl 5-phosphate + NADPH + H(+). Its pathway is amino-acid biosynthesis; L-proline biosynthesis; L-glutamate 5-semialdehyde from L-glutamate: step 2/2. Its function is as follows. Catalyzes the NADPH-dependent reduction of L-glutamate 5-phosphate into L-glutamate 5-semialdehyde and phosphate. The product spontaneously undergoes cyclization to form 1-pyrroline-5-carboxylate. The polypeptide is Gamma-glutamyl phosphate reductase (Pseudomonas fluorescens (strain SBW25)).